Reading from the N-terminus, the 446-residue chain is Na(+)-translocating NADH-quinone reductase subunit A (446 aa).

This sequence belongs to the NqrA family. In terms of assembly, composed of six subunits; NqrA, NqrB, NqrC, NqrD, NqrE and NqrF.

It catalyses the reaction a ubiquinone + n Na(+)(in) + NADH + H(+) = a ubiquinol + n Na(+)(out) + NAD(+). NQR complex catalyzes the reduction of ubiquinone-1 to ubiquinol by two successive reactions, coupled with the transport of Na(+) ions from the cytoplasm to the periplasm. NqrA to NqrE are probably involved in the second step, the conversion of ubisemiquinone to ubiquinol. This Vibrio atlanticus (strain LGP32) (Vibrio splendidus (strain Mel32)) protein is Na(+)-translocating NADH-quinone reductase subunit A.